Consider the following 247-residue polypeptide: Ribonuclease 3 (247 aa).

One can recognise an RNase III domain in the interval 5–147 (LIALQERLQH…LIGAVYLDAG (143 aa)). Mg(2+) is bound at residue Glu-40. The active site involves Asp-44. Positions 104–124 (QRRSRRRCADELQPDEAGSGG) are disordered. The Mg(2+) site is built by Asp-133 and Glu-136. Glu-136 is a catalytic residue. A DRBM domain is found at 174–244 (DAKTALQEWL…AAAMLATLKA (71 aa)).

The protein belongs to the ribonuclease III family. Homodimer. Mg(2+) is required as a cofactor.

Its subcellular location is the cytoplasm. The catalysed reaction is Endonucleolytic cleavage to 5'-phosphomonoester.. Digests double-stranded RNA. Involved in the processing of primary rRNA transcript to yield the immediate precursors to the large and small rRNAs (23S and 16S). Processes some mRNAs, and tRNAs when they are encoded in the rRNA operon. Processes pre-crRNA and tracrRNA of type II CRISPR loci if present in the organism. The protein is Ribonuclease 3 of Verminephrobacter eiseniae (strain EF01-2).